The following is a 292-amino-acid chain: CCR4-NOT transcription complex subunit 8 (292 aa).

A divalent metal cation contacts are provided by Asp-40, Glu-42, Asp-161, and Asp-230.

The protein belongs to the CAF1 family. Component of the CCR4-NOT complex; distinct complexes seem to exist that differ in the participation of probably mutually exclusive catalytic subunits; the complex contains two deadenylase subunits, CNOT6 or CNOT6L, and CNOT7 or CNOT8. In the complex interacts directly with CNOT1. Interacts with BTG1, BTG2 and TOB1. Interacts with BTG4.

Its subcellular location is the cytoplasm. It localises to the nucleus. It catalyses the reaction Exonucleolytic cleavage of poly(A) to 5'-AMP.. In terms of biological role, has 3'-5' poly(A) exoribonuclease activity for synthetic poly(A) RNA substrate. Its function seems to be partially redundant with that of CNOT7. Catalytic component of the CCR4-NOT complex which is linked to various cellular processes including bulk mRNA degradation, miRNA-mediated repression, translational repression during translational initiation and general transcription regulation. During miRNA-mediated repression the complex also seems to act as translational repressor during translational initiation. Additional complex functions may be a consequence of its influence on mRNA expression. Associates with members of the BTG family such as TOB1 and BTG2 and is required for their anti-proliferative activity. The protein is CCR4-NOT transcription complex subunit 8 (CNOT8) of Homo sapiens (Human).